The following is a 574-amino-acid chain: 2-succinyl-5-enolpyruvyl-6-hydroxy-3-cyclohexene-1-carboxylate synthase (574 aa).

The protein belongs to the TPP enzyme family. MenD subfamily. Homodimer. It depends on Mg(2+) as a cofactor. The cofactor is Mn(2+). Thiamine diphosphate is required as a cofactor.

It carries out the reaction isochorismate + 2-oxoglutarate + H(+) = 5-enolpyruvoyl-6-hydroxy-2-succinyl-cyclohex-3-ene-1-carboxylate + CO2. It participates in quinol/quinone metabolism; 1,4-dihydroxy-2-naphthoate biosynthesis; 1,4-dihydroxy-2-naphthoate from chorismate: step 2/7. It functions in the pathway quinol/quinone metabolism; menaquinone biosynthesis. Catalyzes the thiamine diphosphate-dependent decarboxylation of 2-oxoglutarate and the subsequent addition of the resulting succinic semialdehyde-thiamine pyrophosphate anion to isochorismate to yield 2-succinyl-5-enolpyruvyl-6-hydroxy-3-cyclohexene-1-carboxylate (SEPHCHC). This Rubrobacter xylanophilus (strain DSM 9941 / JCM 11954 / NBRC 16129 / PRD-1) protein is 2-succinyl-5-enolpyruvyl-6-hydroxy-3-cyclohexene-1-carboxylate synthase.